The primary structure comprises 91 residues: CLAVATA3/ESR (CLE)-related protein 27 (91 aa).

The first 35 residues, 1-35 (MTHAREWRSSLTTTLLMVILLSYMLHLFCVYSRVG), serve as a signal peptide directing secretion. Hydroxyproline occurs at positions 83 and 86. O-linked (Ara...) hydroxyproline glycosylation occurs at proline 86.

This sequence belongs to the CLV3/ESR signal peptide family. The O-glycosylation (arabinosylation) of the hydroxyproline Pro-86 enhances binding affinity of the CLE27p peptide for its receptor. Mostly expressed in apex, and, to a lower extent, in roots, leaves, flowers and siliques.

It is found in the secreted. It localises to the extracellular space. In terms of biological role, extracellular signal peptide that regulates cell fate. Represses root apical meristem maintenance. The chain is CLAVATA3/ESR (CLE)-related protein 27 from Arabidopsis thaliana (Mouse-ear cress).